Here is a 294-residue protein sequence, read N- to C-terminus: HTH-type transcriptional regulator TcbR (294 aa).

Residues 1–58 form the HTH lysR-type domain; sequence MEFRQLKYFIAVAEAGNMAAAAKRLHVSQPPITRQMQALEADLGVVLLERSHRGIELT. A DNA-binding region (H-T-H motif) is located at residues 18–37; the sequence is MAAAAKRLHVSQPPITRQMQ.

Belongs to the LysR transcriptional regulatory family.

Functionally, involved in regulation of chlorinated catechol metabolism. Transcriptional activator of the tcbCDEF chlorocatechol oxidative operon. May bind 2-chloromuconate as an inducer. In Pseudomonas sp. (strain P51), this protein is HTH-type transcriptional regulator TcbR (tcbR).